Here is a 264-residue protein sequence, read N- to C-terminus: MNRTLNREQVLALAEHIENAELQAHDIHKVTNDYPEMTFADAYTIQWEIRRRKEERGNKIVGLKMGLTSWAKMAQMGVETPIYGFLADYFSVPDGGVVDCSKLIHPKIEAEIAVVTKAPLVGPGCHIGDVIAAVDYVIPTVEVIDSRYENFKFDLISVVADNASSTRYITGGRMANLEDVDLRTLGVVMEKNGEVVELGAGAAVLGHPLSSVAMLANLLAERGEHIPAGTFIMTGGITAAVAVAPGDNITVRYQGLGSVSARFV.

This sequence belongs to the hydratase/decarboxylase family.

It catalyses the reaction (3E)-2-oxohex-3-enedioate + H(+) = 2-oxopent-4-enoate + CO2. The protein operates within xenobiotic degradation; toluene degradation. The chain is 4-oxalocrotonate decarboxylase (xylI) from Pseudomonas putida (Arthrobacter siderocapsulatus).